The following is a 369-amino-acid chain: MIALLILSLTCSVSTYRLQGFTNAGIVAYKNIQDDNIVFSPFGYSFSMFMSLLPASGNTRIELLKTMDLRKRDLGPAFTELISGLAKLKTSKYTYTDLTYQSFVDNTVCIKPSYYQQYHRFGLYRLNFRRDAVNKINSIVERRSGMSNVVDSNMLDNNTLWAIINTIYFKGIWQYPFDITKTRNASFTNKYGTKTVPMMNVVTKLQGNTITIDDEEYDMVRLPYKDANISMYLAIGDNMTHFTDSITAAKLDYWSFQLGNKVYNLKLPKFSIENKRDIKSIAEMMAPSMFNPDNASFKHMTRDPLYIYKMFQNAKIDVDEQGTVAEASTIMVATARSSPEKLEFNTPFVFIIRHDITGFILFMGKVESP.

A signal peptide spans 1-15 (MIALLILSLTCSVST).

The protein belongs to the serpin family. Orthopoxvirus OPG040 subfamily. As to quaternary structure, interacts with OPG185/A56 protein.

The protein resides in the virion membrane. The protein localises to the host cell membrane. Negatively regulates superinfection and syncytium formation in infected host cells. Acts in concert with OPG185/A56 protein at the host cell membrane by interacting with and inhibiting the mature virion entry/fusion complex (EFC). This mechanism ensures that new virions released from the cell cannot enter already infected cells. This Vaccinia virus (strain Western Reserve) (VACV) protein is Superinfection exclusion protein (OPG040).